Here is a 465-residue protein sequence, read N- to C-terminus: ATP synthase subunit beta (465 aa).

152 to 159 (GGAGVGKT) provides a ligand contact to ATP.

This sequence belongs to the ATPase alpha/beta chains family. As to quaternary structure, F-type ATPases have 2 components, CF(1) - the catalytic core - and CF(0) - the membrane proton channel. CF(1) has five subunits: alpha(3), beta(3), gamma(1), delta(1), epsilon(1). CF(0) has three main subunits: a(1), b(2) and c(9-12). The alpha and beta chains form an alternating ring which encloses part of the gamma chain. CF(1) is attached to CF(0) by a central stalk formed by the gamma and epsilon chains, while a peripheral stalk is formed by the delta and b chains.

Its subcellular location is the cell inner membrane. It carries out the reaction ATP + H2O + 4 H(+)(in) = ADP + phosphate + 5 H(+)(out). Functionally, produces ATP from ADP in the presence of a proton gradient across the membrane. The catalytic sites are hosted primarily by the beta subunits. The protein is ATP synthase subunit beta of Campylobacter concisus (strain 13826).